A 708-amino-acid chain; its full sequence is Capsid scaffolding protein (708 aa).

Active-site charge relay system residues include His-63, Ser-132, and His-157. 3 disordered regions span residues 269 to 339 (ASAE…MSHP), 455 to 565 (HPSY…QQQR), and 593 to 619 (ALPSAASSSPTTTTVCTPTGELTSGGG). The segment covering 284–293 (PAAGARVPSS) has biased composition (low complexity). The segment covering 294-311 (SPSPPVEPPSPVQPPALP) has biased composition (pro residues). Positions 326-339 (SPSEPAEAASMSHP) are enriched in low complexity. The segment at 333-352 (AASMSHPLSAAVPAATAPPG) is interaction with pAP. Basic residues predominate over residues 498–513 (KQHRHGGSGGHNKRRK). 2 short sequence motifs (nuclear localization signal) span residues 510 to 515 (KRRKET) and 537 to 543 (RARKRLK). The span at 593–611 (ALPSAASSSPTTTTVCTPT) shows a compositional bias: low complexity. Positions 688–708 (PPKDMVDLNRRIFVAALNKLE) are interaction with major capsid protein.

The protein belongs to the herpesviridae capsid scaffolding protein family. As to quaternary structure, homomultimer. Interacts with major capsid protein. In terms of assembly, exists in a monomer-dimer equilibrium with the dimer being the active species. In terms of processing, capsid scaffolding protein is cleaved by assemblin after formation of the spherical procapsid. As a result, the capsid obtains its mature, icosahedral shape. Cleavages occur at two or more sites: release (R-site) and maturation (M-site).

It localises to the host cytoplasm. The protein localises to the host nucleus. The catalysed reaction is Cleaves -Ala-|-Ser- and -Ala-|-Ala- bonds in the scaffold protein.. Acts as a scaffold protein by binding major capsid protein in the cytoplasm, inducing the nuclear localization of both proteins. Multimerizes in the nucleus such as major capsid protein forms the icosahedral T=16 capsid. Autocatalytic cleavage releases the assembly protein, and subsequently abolishes interaction with major capsid protein. Cleavages products are evicted from the capsid before or during DNA packaging. Functionally, protease that plays an essential role in virion assembly within the nucleus. Catalyzes the cleavage of the assembly protein after formation of the spherical procapsid. By that cleavage, the capsid matures and gains its icosahedral shape. The cleavage sites seem to include -Ala-Ser-, -Ala-Ala-, as well as Ala-Thr bonds. Assemblin and cleavages products are evicted from the capsid before or during DNA packaging. In terms of biological role, plays a major role in capsid assembly. Acts as a scaffold protein by binding major capsid protein. Multimerizes in the nucleus such as major capsid protein forms the icosahedral T=16 capsid. Cleaved by assemblin after capsid completion. The cleavages products are evicted from the capsid before or during DNA packaging. The sequence is that of Capsid scaffolding protein (UL80) from Homo sapiens (Human).